Reading from the N-terminus, the 348-residue chain is Protein pof5 (348 aa).

The protein to yeast YDR306C. In terms of assembly, interacts with skp1.

It is found in the mitochondrion. This Schizosaccharomyces pombe (strain 972 / ATCC 24843) (Fission yeast) protein is Protein pof5 (pof5).